The primary structure comprises 285 residues: 4,4'-diapophytoene synthase (285 aa).

Residues 18–21, Y41, and R45 each bind (2E,6E)-farnesyl diphosphate; that span reads YSKS. Residues D48 and D52 each coordinate Mg(2+). Position 163 (Q163) interacts with (2E,6E)-farnesyl diphosphate. N166 is a binding site for Mg(2+). R169 lines the (2E,6E)-farnesyl diphosphate pocket. D170 is a binding site for Mg(2+). Y247 is a binding site for (2E,6E)-farnesyl diphosphate.

The protein belongs to the phytoene/squalene synthase family. CrtM subfamily. Mg(2+) serves as cofactor.

It catalyses the reaction 2 (2E,6E)-farnesyl diphosphate = 15-cis-4,4'-diapophytoene + 2 diphosphate. Its pathway is carotenoid biosynthesis; staphyloxanthin biosynthesis; staphyloxanthin from farnesyl diphosphate: step 1/5. Functionally, involved in the biosynthesis of the yellow-orange carotenoid staphyloxanthin, which plays a role in the virulence via its protective function against oxidative stress. Catalyzes the head-to-head condensation of two molecules of farnesyl diphosphate (FPP) into the colorless C(30) carotenoid 4,4'-diapophytoene (dehydrosqualene). The sequence is that of 4,4'-diapophytoene synthase (crtM) from Staphylococcus haemolyticus (strain JCSC1435).